Reading from the N-terminus, the 591-residue chain is Probable translation initiation factor IF-2 (591 aa).

The region spanning L7–E223 is the tr-type G domain. Residues G16–T23 form a G1 region. GTP is bound at residue G16–T23. Positions A41–H45 are G2. Residues D78–G81 are G3. Residues D78–H82 and N132–D135 each bind GTP. The tract at residues N132–D135 is G4. Positions S200 to I202 are G5.

The protein belongs to the TRAFAC class translation factor GTPase superfamily. Classic translation factor GTPase family. IF-2 subfamily.

Function in general translation initiation by promoting the binding of the formylmethionine-tRNA to ribosomes. Seems to function along with eIF-2. This chain is Probable translation initiation factor IF-2, found in Methanococcoides burtonii (strain DSM 6242 / NBRC 107633 / OCM 468 / ACE-M).